The chain runs to 177 residues: Large ribosomal subunit protein uL6 (177 aa).

The residue at position 44 (Lys44) is an N6-acetyllysine.

This sequence belongs to the universal ribosomal protein uL6 family. Part of the 50S ribosomal subunit.

In terms of biological role, this protein binds to the 23S rRNA, and is important in its secondary structure. It is located near the subunit interface in the base of the L7/L12 stalk, and near the tRNA binding site of the peptidyltransferase center. The sequence is that of Large ribosomal subunit protein uL6 from Escherichia fergusonii (strain ATCC 35469 / DSM 13698 / CCUG 18766 / IAM 14443 / JCM 21226 / LMG 7866 / NBRC 102419 / NCTC 12128 / CDC 0568-73).